Reading from the N-terminus, the 621-residue chain is 1-deoxy-D-xylulose-5-phosphate synthase (621 aa).

Thiamine diphosphate is bound by residues H80 and G121–S123. Residue D152 participates in Mg(2+) binding. Thiamine diphosphate-binding positions include G153 to A154, N181, Y288, and E370. Residue N181 coordinates Mg(2+).

It belongs to the transketolase family. DXPS subfamily. Homodimer. It depends on Mg(2+) as a cofactor. The cofactor is thiamine diphosphate.

It catalyses the reaction D-glyceraldehyde 3-phosphate + pyruvate + H(+) = 1-deoxy-D-xylulose 5-phosphate + CO2. It functions in the pathway metabolic intermediate biosynthesis; 1-deoxy-D-xylulose 5-phosphate biosynthesis; 1-deoxy-D-xylulose 5-phosphate from D-glyceraldehyde 3-phosphate and pyruvate: step 1/1. Its function is as follows. Catalyzes the acyloin condensation reaction between C atoms 2 and 3 of pyruvate and glyceraldehyde 3-phosphate to yield 1-deoxy-D-xylulose-5-phosphate (DXP). The sequence is that of 1-deoxy-D-xylulose-5-phosphate synthase from Vibrio campbellii (strain ATCC BAA-1116).